Reading from the N-terminus, the 227-residue chain is Lipoprotein-releasing system ATP-binding protein LolD (227 aa).

Positions 5 to 227 (LICQNITKHY…QDGILRESNS (223 aa)) constitute an ABC transporter domain. Residue 41-48 (GSSGSGKS) coordinates ATP.

Belongs to the ABC transporter superfamily. Lipoprotein translocase (TC 3.A.1.125) family. In terms of assembly, the complex is composed of two ATP-binding proteins (LolD) and two transmembrane proteins (LolC and LolE).

It localises to the cell inner membrane. In terms of biological role, part of the ABC transporter complex LolCDE involved in the translocation of mature outer membrane-directed lipoproteins, from the inner membrane to the periplasmic chaperone, LolA. Responsible for the formation of the LolA-lipoprotein complex in an ATP-dependent manner. This Histophilus somni (strain 129Pt) (Haemophilus somnus) protein is Lipoprotein-releasing system ATP-binding protein LolD.